The chain runs to 267 residues: MNFKIVSKGDDRSEKIKAMMRQYLSEFGLTYDKETPDLVISVGGDGTFLEAFHRYVHRLEDTAFIGIHTGHLGFYTDWTPKDVERLIIEIAKTPFQTVEYPLLEVIIRAKAGGKEDRILALNEAMIKTADGSSVVFDVEIKGEHFETFRGDGICISTPSGSTAYNKALGGAILHPSLEAIQITENASINNRVFRTIGSPLILPKHHTCFLKPMVDSSFLIQIDHFTKNYQNVKSIQCRVAKEKVRFARFKQFPFWNRVRDSFVSEEG.

Catalysis depends on aspartate 45, which acts as the Proton acceptor. NAD(+)-binding positions include aspartate 45–glycine 46, asparagine 122–glutamate 123, arginine 149, aspartate 151, and alanine 186.

Belongs to the NAD kinase family. A divalent metal cation serves as cofactor.

The protein resides in the cytoplasm. The enzyme catalyses NAD(+) + ATP = ADP + NADP(+) + H(+). Its function is as follows. Involved in the regulation of the intracellular balance of NAD and NADP, and is a key enzyme in the biosynthesis of NADP. Catalyzes specifically the phosphorylation on 2'-hydroxyl of the adenosine moiety of NAD to yield NADP. In Oceanobacillus iheyensis (strain DSM 14371 / CIP 107618 / JCM 11309 / KCTC 3954 / HTE831), this protein is NAD kinase 1.